Consider the following 104-residue polypeptide: Membrane magnesium transporter (104 aa).

Residues 1-2 (MN) lie on the Cytoplasmic side of the membrane. A helical transmembrane segment spans residues 3-23 (LGFLVGVFGVLILSHAAYSTI). Topologically, residues 24-40 (QYRGLLKIMEEEFSRPP) are lumenal. The chain crosses the membrane as a helical span at residues 41 to 61 (INVILELIIGLALCMWAALTF). The Cytoplasmic segment spans residues 62–104 (PGKFLSIHPDSDENRAVFLPDNSDFMIFNHRGRLFPPQIDMKF).

Belongs to the membrane magnesium transporter (TC 1.A.67) family. As to quaternary structure, component of the ER membrane protein complex (EMC).

Its subcellular location is the endoplasmic reticulum membrane. It is found in the golgi apparatus membrane. It localises to the early endosome membrane. Functionally, mediates Mg(2+) transport. In Arabidopsis thaliana (Mouse-ear cress), this protein is Membrane magnesium transporter.